A 134-amino-acid polypeptide reads, in one-letter code: Probable glycine cleavage system H protein (134 aa).

One can recognise a Lipoyl-binding domain in the interval 29 to 110; it reads TVLVGISDYA…PYENWIAKLK (82 aa). The residue at position 70 (Lys70) is an N6-lipoyllysine.

The protein belongs to the GcvH family. As to quaternary structure, the glycine cleavage system is composed of four proteins: P, T, L and H. (R)-lipoate is required as a cofactor.

The glycine cleavage system catalyzes the degradation of glycine. The H protein shuttles the methylamine group of glycine from the P protein to the T protein. The polypeptide is Probable glycine cleavage system H protein (Thermococcus kodakarensis (strain ATCC BAA-918 / JCM 12380 / KOD1) (Pyrococcus kodakaraensis (strain KOD1))).